A 399-amino-acid polypeptide reads, in one-letter code: Acetate kinase (399 aa).

Mg(2+) is bound at residue N7. An ATP-binding site is contributed by K14. R91 is a substrate binding site. D148 (proton donor/acceptor) is an active-site residue. Residues 208–212 (HLGNG) and 283–285 (DFR) each bind ATP. E384 serves as a coordination point for Mg(2+).

The protein belongs to the acetokinase family. Homodimer. It depends on Mg(2+) as a cofactor. Mn(2+) serves as cofactor.

Its subcellular location is the cytoplasm. It catalyses the reaction acetate + ATP = acetyl phosphate + ADP. It functions in the pathway metabolic intermediate biosynthesis; acetyl-CoA biosynthesis; acetyl-CoA from acetate: step 1/2. Catalyzes the formation of acetyl phosphate from acetate and ATP. Can also catalyze the reverse reaction. The chain is Acetate kinase from Dictyoglomus thermophilum (strain ATCC 35947 / DSM 3960 / H-6-12).